Reading from the N-terminus, the 226-residue chain is Orotidine 5'-phosphate decarboxylase (226 aa).

Substrate is bound by residues Asp-9, Lys-31, 58 to 67 (DLKLYDIPNT), Thr-115, Arg-176, Gln-184, Gly-204, and Arg-205. The active-site Proton donor is the Lys-60.

This sequence belongs to the OMP decarboxylase family. Type 1 subfamily. Homodimer.

It catalyses the reaction orotidine 5'-phosphate + H(+) = UMP + CO2. The protein operates within pyrimidine metabolism; UMP biosynthesis via de novo pathway; UMP from orotate: step 2/2. In terms of biological role, catalyzes the decarboxylation of orotidine 5'-monophosphate (OMP) to uridine 5'-monophosphate (UMP). The sequence is that of Orotidine 5'-phosphate decarboxylase from Wolbachia pipientis subsp. Culex pipiens (strain wPip).